Consider the following 360-residue polypeptide: uncharacterized protein (360 aa).

Positions 4-235 (LSLQHIQKIY…PANMFVAGFI (232 aa)) constitute an ABC transporter domain. An ATP-binding site is contributed by 37–44 (GPSGCGKS).

The protein belongs to the ABC transporter superfamily.

This is an uncharacterized protein from Escherichia coli O6:K15:H31 (strain 536 / UPEC).